An 88-amino-acid chain; its full sequence is Small ribosomal subunit protein uS17 (88 aa).

This sequence belongs to the universal ribosomal protein uS17 family. In terms of assembly, part of the 30S ribosomal subunit.

One of the primary rRNA binding proteins, it binds specifically to the 5'-end of 16S ribosomal RNA. The protein is Small ribosomal subunit protein uS17 of Prochlorococcus marinus (strain SARG / CCMP1375 / SS120).